We begin with the raw amino-acid sequence, 295 residues long: Glutamyl-Q tRNA(Asp) synthetase (295 aa).

Residues 5–9 and Glu-41 contribute to the L-glutamate site; that span reads RFAPS. Residues 8–18 carry the 'HIGH' region motif; sequence PSPTGLLHIGS. Residues Cys-97, Cys-99, Tyr-117, and Cys-121 each coordinate Zn(2+). L-glutamate is bound by residues Tyr-178 and Arg-196. Residues 234–238 carry the 'KMSKS' region motif; the sequence is KWSKQ. Lys-237 contacts ATP.

It belongs to the class-I aminoacyl-tRNA synthetase family. GluQ subfamily. Zn(2+) is required as a cofactor.

Catalyzes the tRNA-independent activation of glutamate in presence of ATP and the subsequent transfer of glutamate onto a tRNA(Asp). Glutamate is transferred on the 2-amino-5-(4,5-dihydroxy-2-cyclopenten-1-yl) moiety of the queuosine in the wobble position of the QUC anticodon. This is Glutamyl-Q tRNA(Asp) synthetase from Neisseria meningitidis serogroup B (strain ATCC BAA-335 / MC58).